The following is a 254-amino-acid chain: Phosphatidylglycerol--prolipoprotein diacylglyceryl transferase (254 aa).

3 helical membrane passes run 11-31 (LAIR…LLLA), 49-69 (FLIA…IFEF), and 84-104 (QGGL…YIYL). A 1,2-diacyl-sn-glycero-3-phospho-(1'-sn-glycerol) is bound at residue R130. 3 consecutive transmembrane segments (helical) span residues 169 to 189 (PTFL…VYLL), 196 to 216 (GIVF…IEGL), and 228 to 248 (VAQL…YNII).

Belongs to the Lgt family.

It is found in the cell membrane. It carries out the reaction L-cysteinyl-[prolipoprotein] + a 1,2-diacyl-sn-glycero-3-phospho-(1'-sn-glycerol) = an S-1,2-diacyl-sn-glyceryl-L-cysteinyl-[prolipoprotein] + sn-glycerol 1-phosphate + H(+). The protein operates within protein modification; lipoprotein biosynthesis (diacylglyceryl transfer). Catalyzes the transfer of the diacylglyceryl group from phosphatidylglycerol to the sulfhydryl group of the N-terminal cysteine of a prolipoprotein, the first step in the formation of mature lipoproteins. The polypeptide is Phosphatidylglycerol--prolipoprotein diacylglyceryl transferase (Clostridium botulinum (strain Loch Maree / Type A3)).